The primary structure comprises 396 residues: Elongation factor Tu (396 aa).

In terms of domain architecture, tr-type G spans 10 to 206 (KPHVNVGTIG…ALDSYIPTPK (197 aa)). The tract at residues 19-26 (GHVDHGKT) is G1. 19-26 (GHVDHGKT) is a GTP binding site. Threonine 26 contributes to the Mg(2+) binding site. The tract at residues 60–64 (GITIS) is G2. Residues 81-84 (DCPG) form a G3 region. GTP is bound by residues 81 to 85 (DCPGH) and 136 to 139 (NKAD). Residues 136–139 (NKAD) form a G4 region. Residues 174-176 (SAL) are G5.

Belongs to the TRAFAC class translation factor GTPase superfamily. Classic translation factor GTPase family. EF-Tu/EF-1A subfamily. As to quaternary structure, monomer.

The protein localises to the cytoplasm. It carries out the reaction GTP + H2O = GDP + phosphate + H(+). Functionally, GTP hydrolase that promotes the GTP-dependent binding of aminoacyl-tRNA to the A-site of ribosomes during protein biosynthesis. The sequence is that of Elongation factor Tu from Vesicomyosocius okutanii subsp. Calyptogena okutanii (strain HA).